Consider the following 302-residue polypeptide: Succinate--CoA ligase [ADP-forming] subunit alpha (302 aa).

Residues 17 to 20 (TGST), Lys43, and 96 to 98 (ITE) contribute to the CoA site. Tyr159 serves as a coordination point for substrate. Catalysis depends on His247, which acts as the Tele-phosphohistidine intermediate.

The protein belongs to the succinate/malate CoA ligase alpha subunit family. As to quaternary structure, heterotetramer of two alpha and two beta subunits.

It carries out the reaction succinate + ATP + CoA = succinyl-CoA + ADP + phosphate. It catalyses the reaction GTP + succinate + CoA = succinyl-CoA + GDP + phosphate. It functions in the pathway carbohydrate metabolism; tricarboxylic acid cycle; succinate from succinyl-CoA (ligase route): step 1/1. Functionally, succinyl-CoA synthetase functions in the citric acid cycle (TCA), coupling the hydrolysis of succinyl-CoA to the synthesis of either ATP or GTP and thus represents the only step of substrate-level phosphorylation in the TCA. The alpha subunit of the enzyme binds the substrates coenzyme A and phosphate, while succinate binding and nucleotide specificity is provided by the beta subunit. The polypeptide is Succinate--CoA ligase [ADP-forming] subunit alpha (Staphylococcus aureus (strain COL)).